A 58-amino-acid polypeptide reads, in one-letter code: Glutathione reductase (58 aa).

FAD-binding residues include E5, T12, C13, and K21. A disulfide bridge connects residues C13 and C18.

It belongs to the class-I pyridine nucleotide-disulfide oxidoreductase family. As to quaternary structure, homodimer. FAD is required as a cofactor.

The protein localises to the cytoplasm. It carries out the reaction 2 glutathione + NADP(+) = glutathione disulfide + NADPH + H(+). In terms of biological role, catalyzes the reduction of glutathione disulfide (GSSG) to reduced glutathione (GSH). Constitutes the major mechanism to maintain a high GSH:GSSG ratio in the cytosol. The chain is Glutathione reductase from Spirulina sp.